Reading from the N-terminus, the 871-residue chain is Metabotropic glutamate receptor 6 (871 aa).

An N-terminal signal peptide occupies residues 1–23; that stretch reads MGRLPVLLLWLAWWLSQAGIACG. Over 24–579 the chain is Extracellular; that stretch reads AGSVRLAGGL…VVRLTWSSPW (556 aa). The cysteines at positions 51 and 93 are disulfide-linked. L-glutamate is bound by residues Ser148, 169–171, and Tyr219; that span reads AST. Cystine bridges form between Cys238–Cys530, Cys361–Cys377, Cys417–Cys424, Cys512–Cys531, Cys516–Cys534, Cys537–Cys549, and Cys552–Cys565. An N-linked (GlcNAc...) asparagine glycan is attached at Asn290. Asp301 contributes to the L-glutamate binding site. Lys394 serves as a coordination point for L-glutamate. 2 N-linked (GlcNAc...) asparagine glycosylation sites follow: Asn445 and Asn473. N-linked (GlcNAc...) asparagine glycosylation occurs at Asn561. A helical membrane pass occupies residues 580 to 602; sequence AALPLLLAVLGIMATTTIMATFM. Topologically, residues 603–616 are cytoplasmic; the sequence is RHNDTPIVRASGRE. The helical transmembrane segment at 617–637 threads the bilayer; sequence LSYVLLTGIFLIYAITFLMVA. Residues 638 to 648 are Extracellular-facing; the sequence is EPCAAICAARR. Residues 649-667 form a helical membrane-spanning segment; the sequence is LLLGLGTTLSYSALLTKTN. Residues 668-691 lie on the Cytoplasmic side of the membrane; the sequence is RIYRIFEQGKRSVTPPPFISPTSQ. Residues 692-712 traverse the membrane as a helical segment; it reads LVITFGLTSLQVVGVIAWLGA. At 713–742 the chain is on the extracellular side; that stretch reads QPPHSVIDYEEQRTVDPEQARGVLKCDMSD. A helical membrane pass occupies residues 743–764; the sequence is LSLIGCLGYSLLLMVTCTVYAI. Over 765-777 the chain is Cytoplasmic; sequence KARGVPETFNEAK. Residues 778-800 form a helical membrane-spanning segment; it reads PIGFTMYTTCIIWLAFVPIFFGT. At 801 to 813 the chain is on the extracellular side; it reads AQSAEKIYIQTTT. The helical transmembrane segment at 814 to 839 threads the bilayer; the sequence is LTVSLSLSASVSLGMLYVPKTYVILF. Residues 840–871 lie on the Cytoplasmic side of the membrane; that stretch reads HPEQNVQKRKRSLKKTSTMAAPPQNENAEDAK. The disordered stretch occupies residues 850-871; that stretch reads RSLKKTSTMAAPPQNENAEDAK.

The protein belongs to the G-protein coupled receptor 3 family. Homodimer. Interacts with GPR179. Interacts with photoreceptor synaptic protein LRIT1 (via its N-terminal extracellular domain). In terms of tissue distribution, restricted expression in the inner nuclear layer of the retina.

Its subcellular location is the cell membrane. The protein localises to the endoplasmic reticulum membrane. It localises to the golgi apparatus membrane. The protein resides in the cell projection. It is found in the dendrite. Its function is as follows. G-protein coupled receptor for glutamate. Ligand binding causes a conformation change that triggers signaling via guanine nucleotide-binding proteins (G proteins) and modulates the activity of down-stream effectors, such as adenylate cyclase. Signaling inhibits adenylate cyclase activity. Signaling stimulates TRPM1 channel activity and Ca(2+) uptake. Required for normal vision. The polypeptide is Metabotropic glutamate receptor 6 (Grm6) (Rattus norvegicus (Rat)).